A 254-amino-acid chain; its full sequence is Geranylgeranylglyceryl phosphate synthase (254 aa).

2 residues coordinate Mg(2+): aspartate 27 and serine 56. Residues 174–180 (YLEAGSG), 212–213 (GG), and 234–235 (GT) each bind sn-glycerol 1-phosphate.

This sequence belongs to the GGGP/HepGP synthase family. Group II subfamily. As to quaternary structure, homohexamer. Requires Mg(2+) as cofactor.

It is found in the cytoplasm. It carries out the reaction sn-glycerol 1-phosphate + (2E,6E,10E)-geranylgeranyl diphosphate = sn-3-O-(geranylgeranyl)glycerol 1-phosphate + diphosphate. Its pathway is membrane lipid metabolism; glycerophospholipid metabolism. Its function is as follows. Prenyltransferase that catalyzes the transfer of the geranylgeranyl moiety of geranylgeranyl diphosphate (GGPP) to the C3 hydroxyl of sn-glycerol-1-phosphate (G1P). This reaction is the first ether-bond-formation step in the biosynthesis of archaeal membrane lipids. This chain is Geranylgeranylglyceryl phosphate synthase, found in Aeropyrum pernix (strain ATCC 700893 / DSM 11879 / JCM 9820 / NBRC 100138 / K1).